A 395-amino-acid chain; its full sequence is uncharacterized protein (395 aa).

Disordered stretches follow at residues R185–A282 and G316–S372. A compositionally biased stretch (basic residues) spans L248–R257. Residues A342–Y360 are compositionally biased toward low complexity.

This is an uncharacterized protein from Streptomyces fradiae (Streptomyces roseoflavus).